A 255-amino-acid chain; its full sequence is Superoxide dismutase [Fe] 2, chloroplastic (255 aa).

Residues 1-32 (MAAFASALRVLPSPPAAVPRRLRSREQRQGCR) constitute a chloroplast transit peptide. Residues H67, H119, D203, and H207 each contribute to the Fe cation site.

It belongs to the iron/manganese superoxide dismutase family. In terms of assembly, homodimer. The cofactor is Fe cation. Strongly expressed in the stems of the young seedlings, etiolated seedlings and embryogenic calli, but only minimally expressed in the leaves and the roots.

The protein localises to the plastid. Its subcellular location is the chloroplast. The enzyme catalyses 2 superoxide + 2 H(+) = H2O2 + O2. Functionally, destroys superoxide anion radicals which are normally produced within the cells and which are toxic to biological systems. This is Superoxide dismutase [Fe] 2, chloroplastic from Oryza sativa subsp. japonica (Rice).